A 106-amino-acid polypeptide reads, in one-letter code: UPF0145 protein NE1032 (106 aa).

The protein belongs to the UPF0145 family.

The protein is UPF0145 protein NE1032 of Nitrosomonas europaea (strain ATCC 19718 / CIP 103999 / KCTC 2705 / NBRC 14298).